A 138-amino-acid polypeptide reads, in one-letter code: 6,7-dimethyl-8-ribityllumazine synthase (138 aa).

Residues Phe-13, 45-47 (VFD), and 69-71 (AVI) each bind 5-amino-6-(D-ribitylamino)uracil. Residue 74-75 (AT) participates in (2S)-2-hydroxy-3-oxobutyl phosphate binding. Catalysis depends on His-77, which acts as the Proton donor. Position 102 (Leu-102) interacts with 5-amino-6-(D-ribitylamino)uracil. Residue Arg-117 participates in (2S)-2-hydroxy-3-oxobutyl phosphate binding.

Belongs to the DMRL synthase family.

It carries out the reaction (2S)-2-hydroxy-3-oxobutyl phosphate + 5-amino-6-(D-ribitylamino)uracil = 6,7-dimethyl-8-(1-D-ribityl)lumazine + phosphate + 2 H2O + H(+). It functions in the pathway cofactor biosynthesis; riboflavin biosynthesis; riboflavin from 2-hydroxy-3-oxobutyl phosphate and 5-amino-6-(D-ribitylamino)uracil: step 1/2. Its function is as follows. Catalyzes the formation of 6,7-dimethyl-8-ribityllumazine by condensation of 5-amino-6-(D-ribitylamino)uracil with 3,4-dihydroxy-2-butanone 4-phosphate. This is the penultimate step in the biosynthesis of riboflavin. This is 6,7-dimethyl-8-ribityllumazine synthase from Methanobrevibacter smithii (strain ATCC 35061 / DSM 861 / OCM 144 / PS).